We begin with the raw amino-acid sequence, 559 residues long: Probable alpha-(1-&gt;6)-mannopyranosyltransferase MSMEG_3120/MSMEI_3041 (559 aa).

12 helical membrane passes run 41–61 (FGAT…ARPV), 81–101 (VSLT…LMLG), 202–222 (IVEA…LIVW), 247–267 (LLFM…GLML), 300–316 (WQPM…IAMS), 321–340 (LPSL…RWGG), 355–375 (ISLA…GWLF), 386–406 (WMSP…LLGL), 419–439 (AIGV…VLRG), 455–475 (VLLF…PLAA), 480–500 (PGFR…GPTA), and 507–527 (LFQI…LIAL). Pro residues predominate over residues 535-548 (RPAPEPPARPPEQP). Residues 535–559 (RPAPEPPARPPEQPAPADDAYAESP) form a disordered region.

Belongs to the MptA/B family.

The protein resides in the membrane. Catalyzes the addition of alpha-(1-&gt;6)-mannose residue. This chain is Probable alpha-(1-&gt;6)-mannopyranosyltransferase MSMEG_3120/MSMEI_3041, found in Mycolicibacterium smegmatis (strain ATCC 700084 / mc(2)155) (Mycobacterium smegmatis).